A 336-amino-acid chain; its full sequence is G patch domain and ankyrin repeat-containing protein 1 homolog (336 aa).

ANK repeat units follow at residues 123–152 and 156–185; these read FGWT…QVET and SGNT…LEET. A G-patch domain is found at 240–286; sequence AKNRGLQLMVKQGWDQEHGLGPSQSGRLYPVKTVLRKQRTGLGIEQQ.

The polypeptide is G patch domain and ankyrin repeat-containing protein 1 homolog (Drosophila melanogaster (Fruit fly)).